Reading from the N-terminus, the 144-residue chain is DNA-directed RNA polymerases II and V subunit 6B (144 aa).

Acidic residues predominate over residues 1–32; it reads MADDDYNEVDDLGYEDEPAEPEIEEGVEEDAD. A disordered region spans residues 1–62; that stretch reads MADDDYNEVD…EPVQRPRKTS (62 aa). Basic and acidic residues predominate over residues 46–56; that stretch reads TEDKVETEPVQ.

This sequence belongs to the archaeal Rpo6/eukaryotic RPB6 RNA polymerase subunit family. As to quaternary structure, component of the RNA polymerase II and V complexes.

The protein resides in the nucleus. In terms of biological role, DNA-dependent RNA polymerase catalyzes the transcription of DNA into RNA using the four ribonucleoside triphosphates as substrates. Component of RNA polymerase II which synthesizes mRNA precursors and many functional non-coding RNAs. Pol II is the central component of the basal RNA polymerase II transcription machinery. It is composed of mobile elements that move relative to each other. Component of RNA polymerase V which mediates RNA-directed DNA methylation-dependent (RdDM) transcriptional gene silencing (TGS) of endogenous repeated sequences, including transposable elements. This Arabidopsis thaliana (Mouse-ear cress) protein is DNA-directed RNA polymerases II and V subunit 6B (NRPB6B).